The primary structure comprises 230 residues: Urease accessory protein UreF (230 aa).

It belongs to the UreF family. UreD, UreF and UreG form a complex that acts as a GTP-hydrolysis-dependent molecular chaperone, activating the urease apoprotein by helping to assemble the nickel containing metallocenter of UreC. The UreE protein probably delivers the nickel.

The protein localises to the cytoplasm. Its function is as follows. Required for maturation of urease via the functional incorporation of the urease nickel metallocenter. The sequence is that of Urease accessory protein UreF from Chromohalobacter salexigens (strain ATCC BAA-138 / DSM 3043 / CIP 106854 / NCIMB 13768 / 1H11).